A 748-amino-acid polypeptide reads, in one-letter code: Polyribonucleotide nucleotidyltransferase (748 aa).

Mg(2+) is bound by residues Asp-484 and Asp-490. One can recognise a KH domain in the interval 551 to 610 (PRIETMSVPKDKIRDVIGTGGKVIREIVATTGAKVDIEDDGTVRLSSSDPANIEAAREWI). An S1 motif domain is found at 620–688 (GKIYNGKVVN…NRGKVRLSMR (69 aa)). The interval 693–748 (ETGAELDDNRPPRENAERRGGERPRRDRGPRRESGDRPARRDMEPEFAPAFLRKDS) is disordered. The span at 699-736 (DDNRPPRENAERRGGERPRRDRGPRRESGDRPARRDME) shows a compositional bias: basic and acidic residues.

The protein belongs to the polyribonucleotide nucleotidyltransferase family. The cofactor is Mg(2+).

Its subcellular location is the cytoplasm. The catalysed reaction is RNA(n+1) + phosphate = RNA(n) + a ribonucleoside 5'-diphosphate. Functionally, involved in mRNA degradation. Catalyzes the phosphorolysis of single-stranded polyribonucleotides processively in the 3'- to 5'-direction. The protein is Polyribonucleotide nucleotidyltransferase of Zymomonas mobilis subsp. mobilis (strain ATCC 31821 / ZM4 / CP4).